The following is a 198-amino-acid chain: Recombination protein RecR (198 aa).

The C4-type zinc finger occupies 57–72; the sequence is CSICGNLTESDPCAIC. The Toprim domain maps to 80 to 175; the sequence is TTILVVEESK…KVTRLARGLA (96 aa).

Belongs to the RecR family.

May play a role in DNA repair. It seems to be involved in an RecBC-independent recombinational process of DNA repair. It may act with RecF and RecO. This Lactococcus lactis subsp. cremoris (strain MG1363) protein is Recombination protein RecR.